We begin with the raw amino-acid sequence, 444 residues long: 3-phosphoshikimate 1-carboxyvinyltransferase (444 aa).

Residues K29, S30, and R34 each coordinate 3-phosphoshikimate. K29 contacts phosphoenolpyruvate. Residues G102 and R131 each coordinate phosphoenolpyruvate. 3-phosphoshikimate is bound by residues S176, Q178, D326, and K353. A phosphoenolpyruvate-binding site is contributed by Q178. D326 acts as the Proton acceptor in catalysis. Phosphoenolpyruvate is bound by residues R357 and R399.

This sequence belongs to the EPSP synthase family. In terms of assembly, monomer.

The protein resides in the cytoplasm. It carries out the reaction 3-phosphoshikimate + phosphoenolpyruvate = 5-O-(1-carboxyvinyl)-3-phosphoshikimate + phosphate. Its pathway is metabolic intermediate biosynthesis; chorismate biosynthesis; chorismate from D-erythrose 4-phosphate and phosphoenolpyruvate: step 6/7. In terms of biological role, catalyzes the transfer of the enolpyruvyl moiety of phosphoenolpyruvate (PEP) to the 5-hydroxyl of shikimate-3-phosphate (S3P) to produce enolpyruvyl shikimate-3-phosphate and inorganic phosphate. The sequence is that of 3-phosphoshikimate 1-carboxyvinyltransferase from Synechococcus sp. (strain JA-3-3Ab) (Cyanobacteria bacterium Yellowstone A-Prime).